Reading from the N-terminus, the 156-residue chain is ATP synthase subunit b (156 aa).

The helical transmembrane segment at Leu7 to Leu29 threads the bilayer.

Belongs to the ATPase B chain family. In terms of assembly, F-type ATPases have 2 components, F(1) - the catalytic core - and F(0) - the membrane proton channel. F(1) has five subunits: alpha(3), beta(3), gamma(1), delta(1), epsilon(1). F(0) has three main subunits: a(1), b(2) and c(10-14). The alpha and beta chains form an alternating ring which encloses part of the gamma chain. F(1) is attached to F(0) by a central stalk formed by the gamma and epsilon chains, while a peripheral stalk is formed by the delta and b chains.

The protein resides in the cell inner membrane. Functionally, f(1)F(0) ATP synthase produces ATP from ADP in the presence of a proton or sodium gradient. F-type ATPases consist of two structural domains, F(1) containing the extramembraneous catalytic core and F(0) containing the membrane proton channel, linked together by a central stalk and a peripheral stalk. During catalysis, ATP synthesis in the catalytic domain of F(1) is coupled via a rotary mechanism of the central stalk subunits to proton translocation. Its function is as follows. Component of the F(0) channel, it forms part of the peripheral stalk, linking F(1) to F(0). The protein is ATP synthase subunit b of Shewanella pealeana (strain ATCC 700345 / ANG-SQ1).